Reading from the N-terminus, the 85-residue chain is UPF0335 protein WP0746 (85 aa).

This sequence belongs to the UPF0335 family.

The chain is UPF0335 protein WP0746 from Wolbachia pipientis subsp. Culex pipiens (strain wPip).